A 270-amino-acid polypeptide reads, in one-letter code: MLLAIDVRNTHTVVGLISGSGSHGKVEHHWRIRTESEVTADELALTIDGLIGDDAELLTGAAGLSTVPSVLHEVRVMLEQYWPSVPHVLIEPGVRTGIPLLVDNPKEVGADRIVNCLAAYQKYGSAAIVVDFGSSICVDVVSAKGEFLGGAIAPGVQVSSDAAAARSAALRRVELTRPRSVVGKNTVECMQAGAVFGFAALVDGLVNRIREDVDGFGGDDVTVVATGHSAPLVLEDLSTVQHYDRHLTLDGLRLVFERNRDNQRKLKQAR.

6–13 contacts ATP; it reads DVRNTHTV. A substrate-binding site is contributed by 109-112; the sequence is GADR. Catalysis depends on Asp111, which acts as the Proton acceptor. Position 131 (Asp131) interacts with K(+). Residue Ser134 coordinates ATP. Thr186 provides a ligand contact to substrate.

The protein belongs to the type III pantothenate kinase family. In terms of assembly, homodimer. NH4(+) is required as a cofactor. K(+) serves as cofactor.

The protein resides in the cytoplasm. The catalysed reaction is (R)-pantothenate + ATP = (R)-4'-phosphopantothenate + ADP + H(+). The protein operates within cofactor biosynthesis; coenzyme A biosynthesis; CoA from (R)-pantothenate: step 1/5. Functionally, catalyzes the phosphorylation of pantothenate (Pan), the first step in CoA biosynthesis. This chain is Type III pantothenate kinase, found in Mycolicibacterium gilvum (strain PYR-GCK) (Mycobacterium gilvum (strain PYR-GCK)).